Reading from the N-terminus, the 407-residue chain is Multifunctional CCA protein (407 aa).

Residues glycine 8 and arginine 11 each contribute to the ATP site. The CTP site is built by glycine 8 and arginine 11. Residues aspartate 21 and aspartate 23 each contribute to the Mg(2+) site. ATP is bound by residues arginine 91, arginine 137, and arginine 140. CTP is bound by residues arginine 91, arginine 137, and arginine 140. The region spanning 228-329 (TGMHTLMVSQ…IKIFDKMDLW (102 aa)) is the HD domain.

This sequence belongs to the tRNA nucleotidyltransferase/poly(A) polymerase family. Bacterial CCA-adding enzyme type 1 subfamily. In terms of assembly, monomer. Can also form homodimers and oligomers. Requires Mg(2+) as cofactor. It depends on Ni(2+) as a cofactor.

It catalyses the reaction a tRNA precursor + 2 CTP + ATP = a tRNA with a 3' CCA end + 3 diphosphate. The catalysed reaction is a tRNA with a 3' CCA end + 2 CTP + ATP = a tRNA with a 3' CCACCA end + 3 diphosphate. Catalyzes the addition and repair of the essential 3'-terminal CCA sequence in tRNAs without using a nucleic acid template. Adds these three nucleotides in the order of C, C, and A to the tRNA nucleotide-73, using CTP and ATP as substrates and producing inorganic pyrophosphate. tRNA 3'-terminal CCA addition is required both for tRNA processing and repair. Also involved in tRNA surveillance by mediating tandem CCA addition to generate a CCACCA at the 3' terminus of unstable tRNAs. While stable tRNAs receive only 3'-terminal CCA, unstable tRNAs are marked with CCACCA and rapidly degraded. This is Multifunctional CCA protein from Aliivibrio salmonicida (strain LFI1238) (Vibrio salmonicida (strain LFI1238)).